The chain runs to 177 residues: Antigen TpF1 (177 aa).

The protein belongs to the Dps family. Homodecamer; either linked or stabilized by disulfide bonds.

Functionally, may play an important structural role in the outer membrane. The polypeptide is Antigen TpF1 (tpf1) (Treponema pallidum (strain Nichols)).